The primary structure comprises 237 residues: Sugar fermentation stimulation protein homolog (237 aa).

This sequence belongs to the SfsA family.

In Pseudomonas syringae pv. syringae (strain B728a), this protein is Sugar fermentation stimulation protein homolog.